We begin with the raw amino-acid sequence, 157 residues long: Ribosome maturation factor RimP (157 aa).

It belongs to the RimP family.

It is found in the cytoplasm. Required for maturation of 30S ribosomal subunits. The chain is Ribosome maturation factor RimP from Thermosynechococcus vestitus (strain NIES-2133 / IAM M-273 / BP-1).